A 187-amino-acid chain; its full sequence is Elongation factor P (187 aa).

It belongs to the elongation factor P family.

The protein resides in the cytoplasm. It participates in protein biosynthesis; polypeptide chain elongation. In terms of biological role, involved in peptide bond synthesis. Stimulates efficient translation and peptide-bond synthesis on native or reconstituted 70S ribosomes in vitro. Probably functions indirectly by altering the affinity of the ribosome for aminoacyl-tRNA, thus increasing their reactivity as acceptors for peptidyl transferase. This chain is Elongation factor P, found in Parafrankia sp. (strain EAN1pec).